We begin with the raw amino-acid sequence, 589 residues long: PTS system mannitol-specific EIICB component (589 aa).

Residues 1–25 are Cytoplasmic-facing; sequence MERKSSLKVRVQKLGTSLSNMVMPN. The 334-residue stretch at 14–347 folds into the PTS EIIC type-2 domain; the sequence is LGTSLSNMVM…ILKSDNSDDD (334 aa). The helical transmembrane segment at 26–47 threads the bilayer; sequence IGAFIAWGVAASLFIATGYLPN. Over 48–51 the chain is Extracellular; that stretch reads KALD. Residues 52-73 form a helical membrane-spanning segment; that stretch reads TNVVGPMLKYVLPLLIGYTGGY. The Cytoplasmic portion of the chain corresponds to 74–136; sequence NIHKQRGGVI…TGFEMLVNNF (63 aa). The chain crosses the membrane as a helical span at residues 137–158; the sequence is SLGLIGFALMVLAFFVIGPVVA. The Extracellular segment spans residues 159-167; sequence QLTEWVGIG. A helical membrane pass occupies residues 168-188; that stretch reads VEAIVKVHLLPLANLIIEPAK. Residues 189–275 lie on the Cytoplasmic side of the membrane; that stretch reads ILFLNNALNH…VMMKPAMFLA (87 aa). A helical membrane pass occupies residues 276-295; it reads VIAGGLTGTFTFQTLGAGLT. Residues 296–317 are Extracellular-facing; the sequence is APASPGSIIAIMGMSPKGWGPH. The chain crosses the membrane as a helical span at residues 318 to 339; sequence LVVLAGVFAAAVASFLVASIIL. Topologically, residues 340-589 are cytoplasmic; sequence KSDNSDDDSL…YDKLVARMHK (250 aa). A PTS EIIB type-2 domain is found at 383-478; it reads HQIIFACDAG…SLTNGKASGS (96 aa). The active-site Phosphocysteine intermediate; for EIIB activity is the C389. Residue C389 is modified to Phosphocysteine; by EIIA.

Homodimer.

The protein localises to the cell membrane. The enzyme catalyses D-mannitol(out) + N(pros)-phospho-L-histidyl-[protein] = D-mannitol 1-phosphate(in) + L-histidyl-[protein]. In terms of biological role, the phosphoenolpyruvate-dependent sugar phosphotransferase system (sugar PTS), a major carbohydrate active transport system, catalyzes the phosphorylation of incoming sugar substrates concomitantly with their translocation across the cell membrane. The enzyme II CmtAB PTS system is involved in D-mannitol transport. The protein is PTS system mannitol-specific EIICB component of Streptococcus mutans serotype c (strain ATCC 700610 / UA159).